Consider the following 154-residue polypeptide: Myoglobin (154 aa).

Residues 2–148 (GLSDGEWQLV…FRNDMATKYK (147 aa)) enclose the Globin domain. At Ser-4 the chain carries Phosphoserine. Residue His-65 coordinates nitrite. Residue His-65 participates in O2 binding. His-94 is a heme b binding site.

This sequence belongs to the globin family. In terms of assembly, monomeric.

Its subcellular location is the cytoplasm. It is found in the sarcoplasm. The enzyme catalyses Fe(III)-heme b-[protein] + nitric oxide + H2O = Fe(II)-heme b-[protein] + nitrite + 2 H(+). It catalyses the reaction H2O2 + AH2 = A + 2 H2O. Monomeric heme protein which primary function is to store oxygen and facilitate its diffusion within muscle tissues. Reversibly binds oxygen through a pentacoordinated heme iron and enables its timely and efficient release as needed during periods of heightened demand. Depending on the oxidative conditions of tissues and cells, and in addition to its ability to bind oxygen, it also has a nitrite reductase activity whereby it regulates the production of bioactive nitric oxide. Under stress conditions, like hypoxia and anoxia, it also protects cells against reactive oxygen species thanks to its pseudoperoxidase activity. The sequence is that of Myoglobin (MB) from Tachyglossus aculeatus aculeatus (Southeast Australian short-beaked echidna).